The primary structure comprises 566 residues: Arginine--tRNA ligase (566 aa).

Positions 121–131 match the 'HIGH' region motif; it reads ANPNGPFHIGH.

Belongs to the class-I aminoacyl-tRNA synthetase family.

The protein resides in the cytoplasm. The catalysed reaction is tRNA(Arg) + L-arginine + ATP = L-arginyl-tRNA(Arg) + AMP + diphosphate. The polypeptide is Arginine--tRNA ligase (Methanococcus maripaludis (strain DSM 14266 / JCM 13030 / NBRC 101832 / S2 / LL)).